The chain runs to 326 residues: Chain length determinant protein (326 aa).

Residues 1–31 are Cytoplasmic-facing; it reads MRVENNNVSGQNHDPEQIDLIDLLVQLWRGK. The helical transmembrane segment at 32–52 threads the bilayer; that stretch reads MTIIISVIVAIALAIGYLAVA. Over 53–295 the chain is Periplasmic; sequence KEKWTSTAII…LPIRRDSPKK (243 aa). Residues 296–316 traverse the membrane as a helical segment; sequence AITLILAVLLGGMVGAGIVLG. Topologically, residues 317 to 326 are cytoplasmic; the sequence is RNALRNYNAK.

Belongs to the WzzB/Cld/Rol family. In terms of assembly, homodimer.

It is found in the cell inner membrane. It functions in the pathway bacterial outer membrane biogenesis; lipopolysaccharide biosynthesis. Its function is as follows. Confers a modal distribution of chain length on the O-antigen component of lipopolysaccharide (LPS). Gives rise to a reduced number of short chain molecules and increases in numbers of longer molecules. The protein is Chain length determinant protein (wzzB) of Escherichia coli (strain K12).